Here is a 321-residue protein sequence, read N- to C-terminus: Anthranilate phosphoribosyltransferase (321 aa).

Residues Gly72, 75–76 (GD), Thr80, 82–85 (NVST), 99–107 (KHGNVSITS), and Ser111 each bind 5-phospho-alpha-D-ribose 1-diphosphate. Gly72 lines the anthranilate pocket. Mg(2+) is bound at residue Ser84. Residue Asn102 coordinates anthranilate. An anthranilate-binding site is contributed by Arg157. 2 residues coordinate Mg(2+): Asp216 and Glu217.

The protein belongs to the anthranilate phosphoribosyltransferase family. Homodimer. Mg(2+) serves as cofactor.

It catalyses the reaction N-(5-phospho-beta-D-ribosyl)anthranilate + diphosphate = 5-phospho-alpha-D-ribose 1-diphosphate + anthranilate. The protein operates within amino-acid biosynthesis; L-tryptophan biosynthesis; L-tryptophan from chorismate: step 2/5. Its function is as follows. Catalyzes the transfer of the phosphoribosyl group of 5-phosphorylribose-1-pyrophosphate (PRPP) to anthranilate to yield N-(5'-phosphoribosyl)-anthranilate (PRA). This Methanococcus maripaludis (strain DSM 14266 / JCM 13030 / NBRC 101832 / S2 / LL) protein is Anthranilate phosphoribosyltransferase.